Here is a 376-residue protein sequence, read N- to C-terminus: Polycomb group protein FIE1 (376 aa).

WD repeat units follow at residues 85 to 127 (DKDE…LLKT), 130 to 170 (GHGD…CILI), 176 to 216 (GHRN…PYVE), 242 to 279 (VHSNYVDCTRWLGDFILSKSVDNEIVLWEPKTKEQSPG), 291 to 332 (VPEC…PVLT), and 339 to 376 (QCKSAIRQTAVSFDGSTILACSEDGSIWRWDEVDHPKA).

The protein belongs to the WD repeat ESC family. In terms of assembly, interacts with EZ1. Component of the polycomb repressive complex 2 (PRC2), composed of the core PRC2 components EMF2B, EZ1 and CLF. PRC2 methylates 'Lys-27' residues of histone H3 (H3K27me3), leading to transcriptional repression of the affected target gene. As to expression, widely expressed.

Its function is as follows. Polycomb group (PcG) protein. PcG proteins act by forming multiprotein complexes, which are required to maintain the transcriptionally repressive state of homeotic genes throughout development. PcG proteins are not required to initiate repression, but to maintain it during later stages of development. They act via the methylation of histones, rendering chromatin heritably changed in its expressibility. Involved in the regulation of seed endosperm development, grain filling and seed dormancy. FIE2-containing PcG complex in seed endosperm regulates the expression of various transcription factors by trimethylation on histone H3 'Lys-27' (H3K27me3) of target genes. Involved in the overall expression regulation of a large number of nutrient metabolism genes. Involved in the regulation of seed endosperm development. Involved in the regulation of vegetative development, particularly in stem cell maintenance in the root system, where it maintains the suppression of key differentiation regulators. The protein is Polycomb group protein FIE1 of Oryza sativa subsp. japonica (Rice).